Consider the following 830-residue polypeptide: BLOC-2 complex member HPS5 homolog (830 aa).

WD repeat units lie at residues 25 to 64 (RNNS…FLAI), 67 to 106 (SQLG…STDG), and 114 to 153 (GGPA…GRNI). Positions 578–604 (DTETIVRLLRKLETLMEENEEPNARLK) form a coiled coil.

Belongs to the HPS5 family.

Functionally, has a role in the biogenesis of eye pigment granules. Eye pigment granules are specialized forms of late endosomes or lysosomes. Biogenesis of pigment granules in the eye requires molecular components required for protein delivery to lysosomes. The chain is BLOC-2 complex member HPS5 homolog from Anopheles gambiae (African malaria mosquito).